Reading from the N-terminus, the 254-residue chain is Leucyl/phenylalanyl-tRNA--protein transferase (254 aa).

Residues M1–W10 show a composition bias toward pro residues. The disordered stretch occupies residues M1–S28.

This sequence belongs to the L/F-transferase family.

The protein localises to the cytoplasm. The enzyme catalyses N-terminal L-lysyl-[protein] + L-leucyl-tRNA(Leu) = N-terminal L-leucyl-L-lysyl-[protein] + tRNA(Leu) + H(+). It carries out the reaction N-terminal L-arginyl-[protein] + L-leucyl-tRNA(Leu) = N-terminal L-leucyl-L-arginyl-[protein] + tRNA(Leu) + H(+). It catalyses the reaction L-phenylalanyl-tRNA(Phe) + an N-terminal L-alpha-aminoacyl-[protein] = an N-terminal L-phenylalanyl-L-alpha-aminoacyl-[protein] + tRNA(Phe). Functionally, functions in the N-end rule pathway of protein degradation where it conjugates Leu, Phe and, less efficiently, Met from aminoacyl-tRNAs to the N-termini of proteins containing an N-terminal arginine or lysine. In Albidiferax ferrireducens (strain ATCC BAA-621 / DSM 15236 / T118) (Rhodoferax ferrireducens), this protein is Leucyl/phenylalanyl-tRNA--protein transferase.